The sequence spans 62 residues: Potassium channel toxin alpha-KTx 18.3 (62 aa).

A signal peptide spans 1–26 (MHFSGVAFILISMVLIGSIFETTVEA). 3 disulfides stabilise this stretch: Cys-34/Cys-53, Cys-39/Cys-58, and Cys-43/Cys-60.

Belongs to the short scorpion toxin superfamily. Potassium channel inhibitor family. Alpha-KTx 18 subfamily. In terms of tissue distribution, expressed by the venom gland.

It localises to the secreted. In terms of biological role, probable voltage-gated potassium channel inhibitor. The protein is Potassium channel toxin alpha-KTx 18.3 of Tityus discrepans (Venezuelan scorpion).